Here is an 87-residue protein sequence, read N- to C-terminus: Translation initiation factor IF-1 (87 aa).

One can recognise an S1-like domain in the interval 16–87 (LSKEDVIEME…TKGRISYRHK (72 aa)).

This sequence belongs to the IF-1 family. Component of the 30S ribosomal translation pre-initiation complex which assembles on the 30S ribosome in the order IF-2 and IF-3, IF-1 and N-formylmethionyl-tRNA(fMet); mRNA recruitment can occur at any time during PIC assembly.

The protein localises to the cytoplasm. One of the essential components for the initiation of protein synthesis. Stabilizes the binding of IF-2 and IF-3 on the 30S subunit to which N-formylmethionyl-tRNA(fMet) subsequently binds. Helps modulate mRNA selection, yielding the 30S pre-initiation complex (PIC). Upon addition of the 50S ribosomal subunit IF-1, IF-2 and IF-3 are released leaving the mature 70S translation initiation complex. The sequence is that of Translation initiation factor IF-1 from Magnetococcus marinus (strain ATCC BAA-1437 / JCM 17883 / MC-1).